Reading from the N-terminus, the 79-residue chain is Cell division protein ZapB (79 aa).

A coiled-coil region spans residues 1-78 (MSLEALDQLQ…LNSLLGKMDD (78 aa)).

This sequence belongs to the ZapB family. As to quaternary structure, homodimer. The ends of the coiled-coil dimer bind to each other, forming polymers. Interacts with FtsZ.

Its subcellular location is the cytoplasm. In terms of biological role, non-essential, abundant cell division factor that is required for proper Z-ring formation. It is recruited early to the divisome by direct interaction with FtsZ, stimulating Z-ring assembly and thereby promoting cell division earlier in the cell cycle. Its recruitment to the Z-ring requires functional FtsA or ZipA. In Hamiltonella defensa subsp. Acyrthosiphon pisum (strain 5AT), this protein is Cell division protein ZapB.